We begin with the raw amino-acid sequence, 84 residues long: Small ribosomal subunit protein bS16c (84 aa).

Belongs to the bacterial ribosomal protein bS16 family.

The protein localises to the plastid. Its subcellular location is the chloroplast. This chain is Small ribosomal subunit protein bS16c, found in Anthoceros angustus (Hornwort).